Consider the following 122-residue polypeptide: Large ribosomal subunit protein uL14 (122 aa).

Belongs to the universal ribosomal protein uL14 family. As to quaternary structure, part of the 50S ribosomal subunit. Forms a cluster with proteins L3 and L19. In the 70S ribosome, L14 and L19 interact and together make contacts with the 16S rRNA in bridges B5 and B8.

Binds to 23S rRNA. Forms part of two intersubunit bridges in the 70S ribosome. The sequence is that of Large ribosomal subunit protein uL14 from Christiangramia forsetii (strain DSM 17595 / CGMCC 1.15422 / KT0803) (Gramella forsetii).